We begin with the raw amino-acid sequence, 104 residues long: MKVHKGDTVLVISGKDKGAKGKVIQAYPKENRVLVEGVNRIKKHVANSANQRGASSGGIVTQEAPIHVSNVMVVDSDGKPTRIGYRTDENGKRVRISRRNGKDI.

Over residues 82 to 92 the composition is skewed to basic and acidic residues; that stretch reads RIGYRTDENGK. A disordered region spans residues 82–104; it reads RIGYRTDENGKRVRISRRNGKDI. Over residues 93–104 the composition is skewed to basic residues; the sequence is RVRISRRNGKDI.

It belongs to the universal ribosomal protein uL24 family. Part of the 50S ribosomal subunit.

In terms of biological role, one of two assembly initiator proteins, it binds directly to the 5'-end of the 23S rRNA, where it nucleates assembly of the 50S subunit. Its function is as follows. One of the proteins that surrounds the polypeptide exit tunnel on the outside of the subunit. The protein is Large ribosomal subunit protein uL24 of Nocardia farcinica (strain IFM 10152).